Here is a 486-residue protein sequence, read N- to C-terminus: Protein hold'em (486 aa).

The OB DNA-binding region spans 166–285; that stretch reads IITTNVNLLV…DCRLLLAFAA (120 aa).

Belongs to the MEIOB family. In terms of assembly, interacts with mei-9 and Ercc1.

Single-stranded DNA-binding protein required for meiosis. May be involved in the resolution of recombination intermediates into crossovers in the meiotic recombination pathway. This is Protein hold'em (hdm) from Drosophila melanogaster (Fruit fly).